The following is a 390-amino-acid chain: Cell division protein FtsZ (390 aa).

GTP-binding positions include 20 to 24, 106 to 108, Glu-137, Arg-141, and Asp-184; these read GGGNN and GTG.

This sequence belongs to the FtsZ family. As to quaternary structure, homodimer. Polymerizes to form a dynamic ring structure in a strictly GTP-dependent manner. Interacts directly with several other division proteins.

The protein localises to the cytoplasm. Its function is as follows. Essential cell division protein that forms a contractile ring structure (Z ring) at the future cell division site. The regulation of the ring assembly controls the timing and the location of cell division. One of the functions of the FtsZ ring is to recruit other cell division proteins to the septum to produce a new cell wall between the dividing cells. Binds GTP and shows GTPase activity. This is Cell division protein FtsZ from Mycoplasmopsis pulmonis (strain UAB CTIP) (Mycoplasma pulmonis).